The sequence spans 963 residues: MAVFPWHSRNRNYKAELASCRLETVPLECGDYHPLKPITVTESKTKKVSRKGSTSSTSSSSSSSVIDPLSSVLDGTDPLSMFAATSDPAATGTVTDSSRKKRDKDENSFVGPDFEPWANKRVEILARYTTTEKLSINLFMGSEKGRGGAAASAMSEKVRTRLEELDDFEEGSQKELLNLTQQDYVNRIEELNQSLKDAWASDQKVKALKIVIQCSKLLSDTSVIQFYPSKFVLITDILDTFGKLVYERISSMCVDSRSALPDHFSPENVNDTAKETCLNWFFKIASIRELIPRFYVEASILKCNKFLSKTGISECLPRLTCMIRGIGDPLVSVYARAYLCRVGIEVAPHLKESLNKNFFDFLLTFKQIHGDTVQNQLVAQGVELLSYLPLYSPAMGWIFQCVSYHAPEALLTEMMERCKKLGNNALLLNSVMSAFRAEFVATRSMDFIGMIKECDESGFPKHLLFRSLGLNLALADPPENDRLQILNEAWKVITKLKSPQDYINCAEVWVEYTCRHFTKREVNTVLADVIKHMTPDRAFEDSYPQLQSIIQKVIAHFHDFSVLFSVEKFLPFLDMFQKESVRVEVCKCIMEAFIKHQQEPTKDPVILNALLHICKTMHDSVNALTLEDEKRTLAHLINGFIKMVSFGRDFEQQLSFYVESRSMFCNLEPVLVQLIHSVNRLAMETRKVMKGNHSRKTAAFVRACVAYCFITIPSLVGIFTRLNLYLHSGQVALANQCLSQADAFFKAAIGLVPEVPKTISIDGKLRPSEPFLLEFLCNFFSTLLIVPDHPEHGVLFLVRELLNVIQDYTWEDSSDDKIRIYTSVLHLLSAMSQDTYLYHIDKVDSNDSLYGGDSKFLAENSKLCEAVMAQILEHLKTLAKDEALKRQSLLGLSFFNSILAHGDLRNNKLNQLSVNLWHLAQRHGCADTRTMVKTLDYIKKRSKQPDMNHLSELALRLPLQTRT.

A disordered region spans residues 43 to 112 (SKTKKVSRKG…DKDENSFVGP (70 aa)). Over residues 51–72 (KGSTSSTSSSSSSSVIDPLSSV) the composition is skewed to low complexity. S265 is subject to Phosphoserine. Residues 699–719 (AFVRACVAYCFITIPSLVGIF) form a helical membrane-spanning segment.

This sequence belongs to the VPS35L family. Component of the heterotrimeric retriever complex formed by VPS26C, VPS29 and VPS35L. Interacts with VPS29. Interacts with COMMD1, CCDC93 and CCDC22; associates with the CCC (COMMD/CCDC22/CCDC93) complex which contains at least COMMD1 (and possibly other COMM domain-containing proteins), CCDC22 and CCDC93. Interacts with WASHC1, WASHC2A and WASHC2C. Interacts with SNX17 and SNX31.

The protein resides in the membrane. The protein localises to the endosome. Acts as a component of the retriever complex. The retriever complex is a heterotrimeric complex related to retromer cargo-selective complex (CSC) and essential for retromer-independent retrieval and recycling of numerous cargos such as integrin alpha-5/beta-1 (ITGA5:ITGB1). The recruitment of the retriever complex to the endosomal membrane involves CCC and WASH complexes. In the endosomes, drives the retrieval and recycling of NxxY-motif-containing cargo proteins by coupling to SNX17, a cargo essential for the homeostatic maintenance of numerous cell surface proteins associated with processes that include cell migration, cell adhesion, nutrient supply and cell signaling. Involved in copper-dependent ATP7A trafficking between the trans-Golgi network and vesicles in the cell periphery; the function is proposed to depend on its association with the CCC complex and cooperation with the WASH complex on early endosomes. Seems not to be required for CCC complex stability. This is VPS35 endosomal protein-sorting factor-like from Mus musculus (Mouse).